Consider the following 101-residue polypeptide: Small ribosomal subunit protein uS10 (101 aa).

The protein belongs to the universal ribosomal protein uS10 family. In terms of assembly, part of the 30S ribosomal subunit.

Functionally, involved in the binding of tRNA to the ribosomes. The chain is Small ribosomal subunit protein uS10 from Mycobacterium ulcerans (strain Agy99).